The primary structure comprises 388 residues: Succinate--CoA ligase [ADP-forming] subunit beta (388 aa).

The region spanning 9–244 (KQLFAEYGLP…PSQDDPREAH (236 aa)) is the ATP-grasp domain. ATP contacts are provided by residues lysine 46, 53-55 (GRG), glutamate 99, threonine 102, and glutamate 107. 2 residues coordinate Mg(2+): asparagine 199 and aspartate 213. Residues asparagine 264 and 321 to 323 (GIV) each bind substrate.

This sequence belongs to the succinate/malate CoA ligase beta subunit family. As to quaternary structure, heterotetramer of two alpha and two beta subunits. It depends on Mg(2+) as a cofactor.

It catalyses the reaction succinate + ATP + CoA = succinyl-CoA + ADP + phosphate. It carries out the reaction GTP + succinate + CoA = succinyl-CoA + GDP + phosphate. The protein operates within carbohydrate metabolism; tricarboxylic acid cycle; succinate from succinyl-CoA (ligase route): step 1/1. In terms of biological role, succinyl-CoA synthetase functions in the citric acid cycle (TCA), coupling the hydrolysis of succinyl-CoA to the synthesis of either ATP or GTP and thus represents the only step of substrate-level phosphorylation in the TCA. The beta subunit provides nucleotide specificity of the enzyme and binds the substrate succinate, while the binding sites for coenzyme A and phosphate are found in the alpha subunit. The chain is Succinate--CoA ligase [ADP-forming] subunit beta from Pseudomonas fluorescens (strain ATCC BAA-477 / NRRL B-23932 / Pf-5).